The chain runs to 1215 residues: DNA-directed RNA polymerase subunit beta' (1215 aa).

Positions 60, 62, 75, and 78 each coordinate Zn(2+). Mg(2+) is bound by residues aspartate 450, aspartate 452, and aspartate 454. Cysteine 819, cysteine 893, cysteine 900, and cysteine 903 together coordinate Zn(2+).

It belongs to the RNA polymerase beta' chain family. The RNAP catalytic core consists of 2 alpha, 1 beta, 1 beta' and 1 omega subunit. When a sigma factor is associated with the core the holoenzyme is formed, which can initiate transcription. Mg(2+) is required as a cofactor. It depends on Zn(2+) as a cofactor.

It catalyses the reaction RNA(n) + a ribonucleoside 5'-triphosphate = RNA(n+1) + diphosphate. DNA-dependent RNA polymerase catalyzes the transcription of DNA into RNA using the four ribonucleoside triphosphates as substrates. The protein is DNA-directed RNA polymerase subunit beta' of Levilactobacillus brevis (strain ATCC 367 / BCRC 12310 / CIP 105137 / JCM 1170 / LMG 11437 / NCIMB 947 / NCTC 947) (Lactobacillus brevis).